We begin with the raw amino-acid sequence, 331 residues long: Pseudouridylate synthase TRUB2, mitochondrial (331 aa).

The transit peptide at 1-10 (MGSAGLSRLH) directs the protein to the mitochondrion. Asp-98 (nucleophile) is an active-site residue. The segment at 296–331 (KSLSPGLDTKQLPSPGWSWDSQGPSSTLGLERGAGQ) is disordered. Over residues 314–323 (WDSQGPSSTL) the composition is skewed to polar residues.

Belongs to the pseudouridine synthase TruB family. Forms a regulatory protein-RNA complex, consisting of RCC1L, NGRN, RPUSD3, RPUSD4, TRUB2, FASTKD2 and 16S mt-rRNA.

Its subcellular location is the mitochondrion matrix. It catalyses the reaction a uridine in mRNA = a pseudouridine in mRNA. It carries out the reaction uridine(55) in tRNA = pseudouridine(55) in tRNA. In terms of biological role, minor enzyme contributing to the isomerization of uridine to pseudouridine (pseudouridylation) of specific mitochondrial mRNAs (mt-mRNAs) such as COXI and COXIII mt-mRNAs. As a component of a functional protein-RNA module, consisting of RCC1L, NGRN, RPUSD3, RPUSD4, TRUB2, FASTKD2 and 16S mitochondrial ribosomal RNA (16S mt-rRNA), controls 16S mt-rRNA abundance and is required for intra-mitochondrial translation. Also catalyzes pseudouridylation of some tRNAs, including synthesis of pseudouridine(55) from uracil-55, in the psi GC loop of a subset of tRNAs. In Homo sapiens (Human), this protein is Pseudouridylate synthase TRUB2, mitochondrial.